A 644-amino-acid chain; its full sequence is ATP-dependent zinc metalloprotease FtsH (644 aa).

Residues 1 to 4 (MAKN) lie on the Cytoplasmic side of the membrane. A helical membrane pass occupies residues 5-25 (LILWLVIAVVLMSVFQSFGPS). Over 26–98 (ESNGRKVDYS…VGEPPEEPSL (73 aa)) the chain is Periplasmic. Residues 99 to 119 (LASIFISWFPMLLLIGVWIFF) traverse the membrane as a helical segment. Residues 120-644 (MRQMQGGGGK…NTMSEQLGDK (525 aa)) are Cytoplasmic-facing. 192 to 199 (GPPGTGKT) provides a ligand contact to ATP. Residue H414 participates in Zn(2+) binding. E415 is a catalytic residue. Residues H418 and D492 each coordinate Zn(2+). A disordered region spans residues 599–644 (RPPAGWEDPNGTNNSDSNGTPQAPRPVDEPRTPNPGNTMSEQLGDK). Polar residues-rich tracts occupy residues 608–619 (NGTNNSDSNGTP) and 632–644 (NPGNTMSEQLGDK).

In the central section; belongs to the AAA ATPase family. The protein in the C-terminal section; belongs to the peptidase M41 family. As to quaternary structure, homohexamer. It depends on Zn(2+) as a cofactor.

The protein resides in the cell inner membrane. Its function is as follows. Acts as a processive, ATP-dependent zinc metallopeptidase for both cytoplasmic and membrane proteins. Plays a role in the quality control of integral membrane proteins. The protein is ATP-dependent zinc metalloprotease FtsH of Salmonella typhi.